Here is a 74-residue protein sequence, read N- to C-terminus: Protein translocase subunit SecE (74 aa).

The Cytoplasmic portion of the chain corresponds to 1–36 (MKTDFNQKIEQLKEFIEECRRVWLVLKKPTKDEYLA). The chain crosses the membrane as a helical span at residues 37 to 62 (VAKVTALGISLLGIIGYIIHVPATYI). The Extracellular portion of the chain corresponds to 63–74 (KGILKPPTTPRV).

Belongs to the SecE/SEC61-gamma family. In terms of assembly, component of the Sec protein translocase complex. Heterotrimer consisting of alpha (SecY), beta (SecG) and gamma (SecE) subunits. The heterotrimers can form oligomers, although 1 heterotrimer is thought to be able to translocate proteins. Interacts with the ribosome. May interact with SecDF, and other proteins may be involved.

Its subcellular location is the cell membrane. Its function is as follows. Essential subunit of the protein translocation channel SecYEG. Clamps together the 2 halves of SecY. May contact the channel plug during translocation. The sequence is that of Protein translocase subunit SecE from Methanocaldococcus jannaschii (strain ATCC 43067 / DSM 2661 / JAL-1 / JCM 10045 / NBRC 100440) (Methanococcus jannaschii).